We begin with the raw amino-acid sequence, 86 residues long: Beta-toxin Tz1 (86 aa).

An N-terminal signal peptide occupies residues 1–20 (MTRFVLFICCFFLIGMVVEC). The region spanning 21-83 (KDGYLVGNDG…TWDRATNRCG (63 aa)) is the LCN-type CS-alpha/beta domain. 4 disulfide bridges follow: Cys-31–Cys-82, Cys-35–Cys-57, Cys-43–Cys-63, and Cys-47–Cys-65. Residue Arg-84 is modified to Arginine amide.

This sequence belongs to the long (4 C-C) scorpion toxin superfamily. Sodium channel inhibitor family. Beta subfamily. As to expression, expressed by the venom gland.

The protein localises to the secreted. Beta toxins bind voltage-independently at site-4 of sodium channels (Nav) and shift the voltage of activation toward more negative potentials thereby affecting sodium channel activation and promoting spontaneous and repetitive firing. Strongly affects skeletal muscle channels Nav1.4/SCN4A, poorly affects the neuronal channels Nav1.6/SCN8A and Nav1.2/SCN2A. Induces spastic paralysis of rear limbs, increased salivation, apnea, tachycardia and increased perspiration. This is Beta-toxin Tz1 from Tityus zulianus (Venezuelan scorpion).